The primary structure comprises 215 residues: 16S rRNA (adenine(1408)-N(1))-methyltransferase (215 aa).

Residues Gly32, Asp55, 87–88, 102–107, and 191–193 contribute to the S-adenosyl-L-methionine site; these read AE, LMPWGS, and TSW.

This sequence belongs to the methyltransferase superfamily. Kanamycin-apramycin resistance family.

The catalysed reaction is adenosine(1408) in 16S rRNA + S-adenosyl-L-methionine = N(1)-methyladenosine(1408) in 16S rRNA + S-adenosyl-L-homocysteine + H(+). In terms of biological role, specifically methylates the N(1) position of adenine 1408 in 16S rRNA. Confers resistance to various aminoglycosides, including kanamycin, neomycin and apramycin. The polypeptide is 16S rRNA (adenine(1408)-N(1))-methyltransferase (kamB) (Streptoalloteichus tenebrarius (strain ATCC 17920 / DSM 40477 / JCM 4838 / CBS 697.72 / NBRC 16177 / NCIMB 11028 / NRRL B-12390 / A12253. 1 / ISP 5477) (Streptomyces tenebrarius)).